The primary structure comprises 499 residues: Probable cytosol aminopeptidase (499 aa).

Mn(2+)-binding residues include K263 and D268. The active site involves K275. 3 residues coordinate Mn(2+): D286, D345, and E347. Residue R349 is part of the active site.

The protein belongs to the peptidase M17 family. Requires Mn(2+) as cofactor.

It localises to the cytoplasm. It carries out the reaction Release of an N-terminal amino acid, Xaa-|-Yaa-, in which Xaa is preferably Leu, but may be other amino acids including Pro although not Arg or Lys, and Yaa may be Pro. Amino acid amides and methyl esters are also readily hydrolyzed, but rates on arylamides are exceedingly low.. The enzyme catalyses Release of an N-terminal amino acid, preferentially leucine, but not glutamic or aspartic acids.. Its function is as follows. Presumably involved in the processing and regular turnover of intracellular proteins. Catalyzes the removal of unsubstituted N-terminal amino acids from various peptides. In Chlamydia muridarum (strain MoPn / Nigg), this protein is Probable cytosol aminopeptidase (pepA).